Reading from the N-terminus, the 156-residue chain is uncharacterized protein (156 aa).

The protein belongs to the mimivirus L223/L227/L812 family.

This is an uncharacterized protein from Acanthamoeba polyphaga mimivirus (APMV).